The chain runs to 1432 residues: DNA-directed RNA polymerase subunit beta (1432 aa).

Belongs to the RNA polymerase beta chain family. In terms of assembly, the RNAP catalytic core consists of 2 alpha, 1 beta, 1 beta' and 1 omega subunit. When a sigma factor is associated with the core the holoenzyme is formed, which can initiate transcription.

The catalysed reaction is RNA(n) + a ribonucleoside 5'-triphosphate = RNA(n+1) + diphosphate. Its function is as follows. DNA-dependent RNA polymerase catalyzes the transcription of DNA into RNA using the four ribonucleoside triphosphates as substrates. This is DNA-directed RNA polymerase subunit beta from Solibacter usitatus (strain Ellin6076).